Here is a 526-residue protein sequence, read N- to C-terminus: Cholesterol side-chain cleavage enzyme, mitochondrial (526 aa).

Residues 1 to 36 (MLAKGLSLRSVLVKGCQPFLSPTWQGPVLSTGKGAG) constitute a mitochondrion transit peptide. The span at 30-41 (STGKGAGTSTSS) shows a compositional bias: low complexity. Residues 30–49 (STGKGAGTSTSSPRSFNEIP) are disordered. Residue C458 coordinates heme.

It belongs to the cytochrome P450 family. In terms of assembly, interacts with FDX1/adrenodoxin. The cofactor is heme.

The protein resides in the mitochondrion inner membrane. The catalysed reaction is 6 reduced [adrenodoxin] + cholesterol + 3 O2 + 6 H(+) = 4-methylpentanal + pregnenolone + 6 oxidized [adrenodoxin] + 4 H2O. It carries out the reaction 2 reduced [adrenodoxin] + cholesterol + O2 + 2 H(+) = (22R)-hydroxycholesterol + 2 oxidized [adrenodoxin] + H2O. The enzyme catalyses (22R)-hydroxycholesterol + 2 reduced [adrenodoxin] + O2 + 2 H(+) = (20R,22R)-20,22-dihydroxycholesterol + 2 oxidized [adrenodoxin] + H2O. It catalyses the reaction (20R,22R)-20,22-dihydroxycholesterol + 2 reduced [adrenodoxin] + O2 + 2 H(+) = 4-methylpentanal + pregnenolone + 2 oxidized [adrenodoxin] + 2 H2O. It functions in the pathway lipid metabolism; C21-steroid hormone metabolism. Its pathway is steroid metabolism; cholesterol metabolism. In terms of biological role, a cytochrome P450 monooxygenase that catalyzes the side-chain hydroxylation and cleavage of cholesterol to pregnenolone, the precursor of most steroid hormones. Catalyzes three sequential oxidation reactions of cholesterol, namely the hydroxylation at C22 followed with the hydroxylation at C20 to yield 20R,22R-hydroxycholesterol that is further cleaved between C20 and C22 to yield the C21-steroid pregnenolone and 4-methylpentanal. Mechanistically, uses molecular oxygen inserting one oxygen atom into a substrate and reducing the second into a water molecule. Two electrons are provided by NADPH via a two-protein mitochondrial transfer system comprising flavoprotein FDXR (adrenodoxin/ferredoxin reductase) and nonheme iron-sulfur protein FDX1 or FDX2 (adrenodoxin/ferredoxin). The protein is Cholesterol side-chain cleavage enzyme, mitochondrial of Mus musculus (Mouse).